The following is a 447-amino-acid chain: 2-oxoadipate dioxygenase/decarboxylase (447 aa).

2-oxoadipate is bound by residues His68, Arg72, and His224. His68 lines the Fe(2+) pocket. Fe(2+) contacts are provided by His224 and Glu290. Val391 contributes to the 2-oxoadipate binding site.

This sequence belongs to the 2-oxoadipate dioxygenase/decarboxylase family. Fe(2+) serves as cofactor.

It catalyses the reaction 2-oxoadipate + O2 = (R)-2-hydroxyglutarate + CO2. In terms of biological role, catalyzes the decarboxylation and hydroxylation of 2-oxoadipate (2OA) to form D-2-hydroxyglutarate (D-2-HGA). The chain is 2-oxoadipate dioxygenase/decarboxylase from Shigella flexneri.